Reading from the N-terminus, the 156-residue chain is Ribosome-binding factor A (156 aa).

A disordered region spans residues Ala-129–Arg-156.

This sequence belongs to the RbfA family. In terms of assembly, monomer. Binds 30S ribosomal subunits, but not 50S ribosomal subunits or 70S ribosomes.

It is found in the cytoplasm. In terms of biological role, one of several proteins that assist in the late maturation steps of the functional core of the 30S ribosomal subunit. Associates with free 30S ribosomal subunits (but not with 30S subunits that are part of 70S ribosomes or polysomes). Required for efficient processing of 16S rRNA. May interact with the 5'-terminal helix region of 16S rRNA. The polypeptide is Ribosome-binding factor A (Salinispora arenicola (strain CNS-205)).